The chain runs to 727 residues: MSFNFSRYSGAYTTTFSFLLLALLIVSAVLLSRPYAPALLHAEEAYCVSMSCVTAAASVLSLMDATADPCSDFYQYACGGWVRANPIPDTKSMWGTFVKLEQQNQLVIKNVLEQPMSEFKSEAERKAKLYYMSCLDVNDTIETLGPKPMLDLLVKIGGWNITGNFSIKNWSLQKSLETLQNRYNMGGLFTWAVGEDDRDSKKHIIQIDQGGLTLPTRDNYLNETMDDKVLSAYLEYMTKIGVLLGGEEKNVRTQMKAVIEFETELAKIMSPQEDRRDEEKLYNNMELDKVQGRPPFINWHAFFSNAMENITRKISKKEKVVVYAPEYLEKLNDIIRNYTNTTDGKIILNNYLVWQTVRSMTSYLSKAFRDAYKGLRKALVGSEGGEKPWRYCVTDTNNVIGFAIGAMFVREAFHGNSKPAAENMINQIRTAFKSNLKNLKWMDAETRRAAEKKADAISDMIGFPDYILNPEELDKKYKDLEIKEDEYFENNLRVNKYNLKSNLEKLDQPVNKTRWGMTPPTVNAYYTPTKNQIVFPAGILQAPFYDIGHPKSMNYGAMGVVMGHELTHAFDDQGREYDQNGNLHKWWNNQTIEAFKKRTQCVVDQYSNYTVDNKHVNGKQTLGENIADNGGLKAAYHAYLEWEQRNPRELPLPGLNFSHKQLFFLSFAQVWCSASTDEAIKLQLEKDPHAPPKFRVIGPLSNLQEFSTEFRCPLGSKMNPVHKCEVW.

At 1–44 (MSFNFSRYSGAYTTTFSFLLLALLIVSAVLLSRPYAPALLHAEE) the chain is on the cytoplasmic side. The helical; Signal-anchor for type II membrane protein transmembrane segment at 45-65 (AYCVSMSCVTAAASVLSLMDA) threads the bilayer. The Peptidase M13 domain maps to 46–727 (YCVSMSCVTA…MNPVHKCEVW (682 aa)). 5 disulfide bridges follow: Cys47–Cys52, Cys70–Cys712, Cys78–Cys672, Cys134–Cys392, and Cys601–Cys724. Topologically, residues 66–727 (TADPCSDFYQ…MNPVHKCEVW (662 aa)) are extracellular. Residues Asn138, Asn160, Asn164, Asn169, Asn222, Asn309, Asn337, Asn340, and Asn511 are each glycosylated (N-linked (GlcNAc...) asparagine). His564 serves as a coordination point for Zn(2+). Residue Glu565 is part of the active site. Residue His568 participates in Zn(2+) binding. N-linked (GlcNAc...) asparagine glycosylation is found at Asn589 and Asn608. Glu624 serves as a coordination point for Zn(2+). The active-site Proton donor is the Asp628. N-linked (GlcNAc...) asparagine glycosylation is present at Asn656.

This sequence belongs to the peptidase M13 family. Zn(2+) serves as cofactor. As to expression, highly expressed in brain and midgut, and to a lesser extent in fat body, ovaries, testes and haemocytes.

Its subcellular location is the cell membrane. This chain is Endothelin-converting enzyme homolog, found in Locusta migratoria (Migratory locust).